The primary structure comprises 137 residues: Histone H2B.4 (137 aa).

Positions 1-37 are enriched in basic and acidic residues; sequence MAPKAEKKPAEKKPTEEKAEKKPRAEKRVPGKEGGEK. The disordered stretch occupies residues 1–45; the sequence is MAPKAEKKPAEKKPTEEKAEKKPRAEKRVPGKEGGEKKGKKKAKK. Residues K7 and K27 each carry the N6-acetyllysine modification. K133 participates in a covalent cross-link: Glycyl lysine isopeptide (Lys-Gly) (interchain with G-Cter in ubiquitin).

This sequence belongs to the histone H2B family. As to quaternary structure, the nucleosome is a histone octamer containing two molecules each of H2A, H2B, H3 and H4 assembled in one H3-H4 heterotetramer and two H2A-H2B heterodimers. The octamer wraps approximately 147 bp of DNA. In terms of processing, can be acetylated to form H2BK6ac and H2BK33ac. Post-translationally, monoubiquitinated to form H2BK143ub1; may give a specific tag for epigenetic transcriptional activation.

The protein resides in the nucleus. Its subcellular location is the chromosome. Its function is as follows. Core component of nucleosome. Nucleosomes wrap and compact DNA into chromatin, limiting DNA accessibility to the cellular machineries which require DNA as a template. Histones thereby play a central role in transcription regulation, DNA repair, DNA replication and chromosomal stability. DNA accessibility is regulated via a complex set of post-translational modifications of histones, also called histone code, and nucleosome remodeling. The protein is Histone H2B.4 of Zea mays (Maize).